Reading from the N-terminus, the 288-residue chain is 2-hydroxy-6-oxononadienedioate/2-hydroxy-6-oxononatrienedioate hydrolase (288 aa).

In terms of domain architecture, AB hydrolase-1 spans 39–274 (LVLLHGSGPG…RCGHWAQWEH (236 aa)). The Proton acceptor role is filled by His268.

It belongs to the AB hydrolase superfamily. MhpC family. Homodimer.

The catalysed reaction is (2Z,4E)-2-hydroxy-6-oxonona-2,4-dienedioate + H2O = (2Z)-2-hydroxypenta-2,4-dienoate + succinate + H(+). It catalyses the reaction (2Z,4E,7E)-2-hydroxy-6-oxonona-2,4,7-trienedioate + H2O = (2Z)-2-hydroxypenta-2,4-dienoate + fumarate + H(+). It functions in the pathway aromatic compound metabolism; 3-phenylpropanoate degradation. In terms of biological role, catalyzes the cleavage of the C5-C6 bond of 2-hydroxy-6-oxononadienedioate and 2-hydroxy-6-oxononatrienedioate, a dienol ring fission product of the bacterial meta-cleavage pathway for degradation of phenylpropionic acid. The chain is 2-hydroxy-6-oxononadienedioate/2-hydroxy-6-oxononatrienedioate hydrolase from Paraburkholderia phymatum (strain DSM 17167 / CIP 108236 / LMG 21445 / STM815) (Burkholderia phymatum).